Reading from the N-terminus, the 250-residue chain is Small ribosomal subunit protein uS3 (250 aa).

A KH type-2 domain is found at 39-111 (IRQLINNFSK…DINLNILEVK (73 aa)).

Belongs to the universal ribosomal protein uS3 family. Part of the 30S ribosomal subunit. Forms a tight complex with proteins S10 and S14.

In terms of biological role, binds the lower part of the 30S subunit head. Binds mRNA in the 70S ribosome, positioning it for translation. This is Small ribosomal subunit protein uS3 from Phytoplasma australiense.